Here is a 455-residue protein sequence, read N- to C-terminus: Probable glycine dehydrogenase (decarboxylating) subunit 1 (455 aa).

Belongs to the GcvP family. N-terminal subunit subfamily. The glycine cleavage system is composed of four proteins: P, T, L and H. In this organism, the P 'protein' is a heterodimer of two subunits.

It carries out the reaction N(6)-[(R)-lipoyl]-L-lysyl-[glycine-cleavage complex H protein] + glycine + H(+) = N(6)-[(R)-S(8)-aminomethyldihydrolipoyl]-L-lysyl-[glycine-cleavage complex H protein] + CO2. Its function is as follows. The glycine cleavage system catalyzes the degradation of glycine. The P protein binds the alpha-amino group of glycine through its pyridoxal phosphate cofactor; CO(2) is released and the remaining methylamine moiety is then transferred to the lipoamide cofactor of the H protein. The protein is Probable glycine dehydrogenase (decarboxylating) subunit 1 of Francisella tularensis subsp. mediasiatica (strain FSC147).